Consider the following 264-residue polypeptide: tRNA (guanine-N(1)-)-methyltransferase (264 aa).

S-adenosyl-L-methionine contacts are provided by residues Gly125 and 145–150 (LGDFVL).

The protein belongs to the RNA methyltransferase TrmD family. As to quaternary structure, homodimer.

It is found in the cytoplasm. The catalysed reaction is guanosine(37) in tRNA + S-adenosyl-L-methionine = N(1)-methylguanosine(37) in tRNA + S-adenosyl-L-homocysteine + H(+). Its function is as follows. Specifically methylates guanosine-37 in various tRNAs. The sequence is that of tRNA (guanine-N(1)-)-methyltransferase from Burkholderia cenocepacia (strain HI2424).